The chain runs to 173 residues: Alpha-crystallin A chain (173 aa).

N-acetylmethionine is present on Met1. A sHSP domain is found at 52 to 162; that stretch reads LFRSVLESGI…SHSERPIPVS (111 aa). Residues His100, Glu102, His107, and His154 each coordinate Zn(2+). The disordered stretch occupies residues 142 to 173; it reads SGPKVPSNMDPSHSERPIPVSREEKPTSAPSS. The span at 153-167 shows a compositional bias: basic and acidic residues; the sequence is SHSERPIPVSREEKP. O-linked (GlcNAc) serine glycosylation occurs at Ser162.

It belongs to the small heat shock protein (HSP20) family. As to quaternary structure, heteropolymer composed of three CRYAA and one CRYAB subunits. Inter-subunit bridging via zinc ions enhances stability, which is crucial as there is no protein turn over in the lens. Can also form homodimers and homotetramers (dimers of dimers) which serve as the building blocks of homooligomers. Within homooligomers, the zinc-binding motif is created from residues of 3 different molecules. His-100 and Glu-102 from one molecule are ligands of the zinc ion, and His-107 and His-154 residues from additional molecules complete the site with tetrahedral coordination geometry.

It is found in the cytoplasm. Its subcellular location is the nucleus. Contributes to the transparency and refractive index of the lens. May act as a chaperone, preventing aggregation of various proteins under a wide range of stress conditions. This chain is Alpha-crystallin A chain (CRYAA), found in Gallus gallus (Chicken).